The chain runs to 560 residues: Membrane protein insertase YidC (560 aa).

The next 6 membrane-spanning stretches (helical) occupy residues 5-25 (IINLIAAIILSLSIIFGWQYF), 334-354 (AIDFGWFYIITKPVFYAMNFF), 357-377 (YVGNFGVSILIVTVIIKLLMF), 431-451 (LPILVQIPLFFSIYKVLYVTI), 476-496 (LFGLLPFSPPSFLMIGAWPIL), and 522-542 (FMPLIFLFMFSSFPVGLLIYW).

It belongs to the OXA1/ALB3/YidC family. Type 1 subfamily. As to quaternary structure, interacts with the Sec translocase complex via SecD. Specifically interacts with transmembrane segments of nascent integral membrane proteins during membrane integration.

The protein localises to the cell inner membrane. In terms of biological role, required for the insertion and/or proper folding and/or complex formation of integral membrane proteins into the membrane. Involved in integration of membrane proteins that insert both dependently and independently of the Sec translocase complex, as well as at least some lipoproteins. Aids folding of multispanning membrane proteins. The chain is Membrane protein insertase YidC from Rickettsia felis (strain ATCC VR-1525 / URRWXCal2) (Rickettsia azadi).